The following is a 460-amino-acid chain: TNF receptor-associated factor family protein DDB_G0290883 (460 aa).

Residues 27-67 (CPICFEFIYKKQIYQCKSGHHACKECWEKSLETKKECMTCK) form an RING-type; degenerate zinc finger. TRAF-type zinc fingers lie at residues 141 to 194 (SHLI…KKEL) and 196 to 253 (THYK…SELQ). In terms of domain architecture, MATH spans 320–448 (GYRNKWIISN…DDKLTIEIYI (129 aa)).

Belongs to the TNF receptor-associated factor family. A subfamily.

Its subcellular location is the cytoplasm. Probable adapter protein and signal transducer that links members of the tumor necrosis factor receptor family to different signaling pathways by association with the receptor cytoplasmic domain and kinases. The sequence is that of TNF receptor-associated factor family protein DDB_G0290883 from Dictyostelium discoideum (Social amoeba).